The primary structure comprises 4579 residues: Sacsin (4579 aa).

The 76-residue stretch at 9-84 folds into the Ubiquitin-like domain; that stretch reads VPVTVLPGCV…FVNLQSKGLK (76 aa). The residue at position 943 (Lys943) is an N6-acetyllysine. Residues Ser1779 and Ser2511 each carry the phosphoserine modification. At Thr2516 the chain carries Phosphothreonine. Ser3435 carries the phosphoserine modification. Disordered regions lie at residues 4248 to 4273 and 4279 to 4298; these read PEES…TPGL and LFSG…PKKL. Residues 4254–4267 are compositionally biased toward polar residues; the sequence is SRDSAPSTPTSPTE. The residue at position 4261 (Thr4261) is a Phosphothreonine. Ser4264 is subject to Phosphoserine. The segment covering 4288 to 4298 has biased composition (basic residues); that stretch reads TSSKHQSPKKL. A J domain is found at 4306 to 4393; sequence ILKEVTSVVE…ASRFQSDKYS (88 aa). Residues 4405 to 4427 are disordered; the sequence is ATSHKSERQQQNKEKCPPSAGQT. Over residues 4406–4420 the composition is skewed to basic and acidic residues; it reads TSHKSERQQQNKEKC. In terms of domain architecture, HEPN spans 4451–4567; that stretch reads LRQARANFSA…MRVMECTACI (117 aa).

Highly expressed in the central nervous system. Also found in skeletal muscle and at low levels in pancreas.

It is found in the cytoplasm. Its function is as follows. Co-chaperone which acts as a regulator of the Hsp70 chaperone machinery and may be involved in the processing of other ataxia-linked proteins. In Homo sapiens (Human), this protein is Sacsin (SACS).